A 131-amino-acid polypeptide reads, in one-letter code: MKKIEKTLDEWRSMLDPEQYQVCRLKGTERPFSGKYNSERRDGIYHCICCGLALFDAQTKFDAGCGWPSFYAPIEDSAMIEIRDTSHGMIRTEVTCARCDAHLGHVFPDGPPPTGLRYCINSVCIDLRPRD.

The MsrB domain maps to 8 to 130; the sequence is LDEWRSMLDP…NSVCIDLRPR (123 aa). 4 residues coordinate Zn(2+): Cys-47, Cys-50, Cys-96, and Cys-99. Residue Cys-119 is the Nucleophile of the active site.

The protein belongs to the MsrB Met sulfoxide reductase family. Zn(2+) serves as cofactor.

The enzyme catalyses L-methionyl-[protein] + [thioredoxin]-disulfide + H2O = L-methionyl-(R)-S-oxide-[protein] + [thioredoxin]-dithiol. This Pseudomonas putida (strain ATCC 700007 / DSM 6899 / JCM 31910 / BCRC 17059 / LMG 24140 / F1) protein is Peptide methionine sulfoxide reductase MsrB.